A 790-amino-acid polypeptide reads, in one-letter code: Cadherin-18 (790 aa).

The N-terminal stretch at 1 to 24 is a signal peptide; that stretch reads MKITSTSCICPVLVCLCFVQRCYG. Positions 25–53 are excised as a propeptide; it reads TAHHSSIKVMRNQTKHIEGETEVHHRPKR. N-linked (GlcNAc...) asparagine glycosylation occurs at N36. Cadherin domains are found at residues 54 to 159, 160 to 268, 269 to 383, 384 to 486, and 487 to 608; these read GWVW…APKF, TDGP…PPRF, PQKH…PPLF, SMPS…DNPP, and ELAR…FLSS. The Extracellular portion of the chain corresponds to 54 to 608; the sequence is GWVWNQFFVL…TCHAEAFLSS (555 aa). N255 carries N-linked (GlcNAc...) asparagine glycosylation. 2 N-linked (GlcNAc...) asparagine glycosylation sites follow: N455 and N536. The helical transmembrane segment at 609–636 threads the bilayer; that stretch reads AGLSTGALIAILLCVLILLAIVVLFITL. Over 637 to 790 the chain is Cytoplasmic; sequence RRSKKEPLII…YGEIESERTT (154 aa). S786 bears the Phosphoserine mark.

The protein localises to the cell membrane. Cadherins are calcium-dependent cell adhesion proteins. They preferentially interact with themselves in a homophilic manner in connecting cells; cadherins may thus contribute to the sorting of heterogeneous cell types. This Homo sapiens (Human) protein is Cadherin-18 (CDH18).